A 624-amino-acid chain; its full sequence is MLLSEVLQVLRGAGKVGAAFTSTQGEQLRLMACNSTFGAGMKAAAEAVEGVMGTVMGGGDMTSKTDEFAGIEKWEEMDLDEAAKWSVASEMPPDFSSKDGRGETSETPVGAATGTIKGAGWPAQNTRFLHVSASQHHFRFVHDSIVARLSPEDIQRAREAKQNIARPVRQKLNERAKERKVPATRISRLANFGGLAVGLGIGAIAEVAKQSFGGKRSEVGALLDSPLLSEANAERIVNTLCKVRGAALKIGQMLSIQDNSFINPQLQKIFERVRQSADFMPAWQMHKVLEEELGSGWREKLSSIEEKPFAAASIGQVHHGVLPGGKEIAMKIQYPGVAESIHSDINNLMSVLKMSVVLPDGLFADSSLEVLQRELAWECDYEREAKCAKRFRNLLKGDPVFVVPEVFDELSARRVITMELVNGVPLDRCVDLDQETRNEICFNILQLCLRELFEFRFMQTDPNWSNFFYNSEQNKIFLLDFGACRDYPELFTDHYIEVVHAASVGDRATVLKKSKDLKFLTGFEAKAFEDAHVEAVMILGEAFASAEAFDFGTQSTTQRIQSLIPVMLRHRLTPPPEESYSLHRKMAGSFLICSKLKARFSCRNMFLDVYNAYKRQQQERRSQV.

Positions E90–K117 are disordered. Residues L189–A205 form a helical membrane-spanning segment. The KxGQ motif signature appears at K249 to Q252. A Protein kinase domain is found at M285–L517. Residues A310 to S313 carry the AAAS motif motif. Residues S313, K331, and M418–V421 each bind ATP. D461 functions as the Proton acceptor in the catalytic mechanism. The ATP site is built by N466 and D480.

Belongs to the protein kinase superfamily. ADCK protein kinase family. As to quaternary structure, homodimer; homodimerizes via its transmembrane region. Interacts with the multi-subunit COQ enzyme complex.

The protein resides in the mitochondrion membrane. It is found in the cytoplasm. Its subcellular location is the cytosol. It localises to the cell membrane. Its pathway is cofactor biosynthesis; ubiquinone biosynthesis. In terms of biological role, atypical kinase involved in the biosynthesis of coenzyme Q, also named ubiquinone, an essential lipid-soluble electron transporter for aerobic cellular respiration. Its substrate specificity is still unclear: may act as a protein kinase that mediates phosphorylation of COQ3. According to other reports, acts as a small molecule kinase, possibly a lipid kinase that phosphorylates a prenyl lipid in the ubiquinone biosynthesis pathway, as suggested by its ability to bind coenzyme Q lipid intermediates. However, the small molecule kinase activity was not confirmed by another publication. Required for podocyte migration. The sequence is that of Atypical kinase COQ8B, mitochondrial from Danio rerio (Zebrafish).